We begin with the raw amino-acid sequence, 290 residues long: Malonyl-[acyl-carrier protein] O-methyltransferase (290 aa).

Belongs to the methyltransferase superfamily.

It catalyses the reaction malonyl-[ACP] + S-adenosyl-L-methionine = malonyl-[ACP] methyl ester + S-adenosyl-L-homocysteine. It participates in cofactor biosynthesis; biotin biosynthesis. Functionally, converts the free carboxyl group of a malonyl-thioester to its methyl ester by transfer of a methyl group from S-adenosyl-L-methionine (SAM). It allows to synthesize pimeloyl-ACP via the fatty acid synthetic pathway. This Gallionella capsiferriformans (strain ES-2) (Gallionella ferruginea capsiferriformans (strain ES-2)) protein is Malonyl-[acyl-carrier protein] O-methyltransferase.